A 931-amino-acid chain; its full sequence is Isoleucine--tRNA ligase (931 aa).

A 'HIGH' region motif is present at residues 57-67 (PFANGNIHMGH). Glutamate 556 provides a ligand contact to L-isoleucyl-5'-AMP. The short motif at 597 to 601 (KMSKS) is the 'KMSKS' region element. Lysine 600 is a binding site for ATP. Zn(2+) contacts are provided by cysteine 890, cysteine 893, cysteine 910, and cysteine 913.

The protein belongs to the class-I aminoacyl-tRNA synthetase family. IleS type 1 subfamily. In terms of assembly, monomer. Zn(2+) serves as cofactor.

Its subcellular location is the cytoplasm. The enzyme catalyses tRNA(Ile) + L-isoleucine + ATP = L-isoleucyl-tRNA(Ile) + AMP + diphosphate. Catalyzes the attachment of isoleucine to tRNA(Ile). As IleRS can inadvertently accommodate and process structurally similar amino acids such as valine, to avoid such errors it has two additional distinct tRNA(Ile)-dependent editing activities. One activity is designated as 'pretransfer' editing and involves the hydrolysis of activated Val-AMP. The other activity is designated 'posttransfer' editing and involves deacylation of mischarged Val-tRNA(Ile). This is Isoleucine--tRNA ligase from Lactobacillus delbrueckii subsp. bulgaricus (strain ATCC 11842 / DSM 20081 / BCRC 10696 / JCM 1002 / NBRC 13953 / NCIMB 11778 / NCTC 12712 / WDCM 00102 / Lb 14).